The chain runs to 342 residues: S-adenosylmethionine:tRNA ribosyltransferase-isomerase (342 aa).

The protein belongs to the QueA family. As to quaternary structure, monomer.

The protein resides in the cytoplasm. It carries out the reaction 7-aminomethyl-7-carbaguanosine(34) in tRNA + S-adenosyl-L-methionine = epoxyqueuosine(34) in tRNA + adenine + L-methionine + 2 H(+). The protein operates within tRNA modification; tRNA-queuosine biosynthesis. Functionally, transfers and isomerizes the ribose moiety from AdoMet to the 7-aminomethyl group of 7-deazaguanine (preQ1-tRNA) to give epoxyqueuosine (oQ-tRNA). The protein is S-adenosylmethionine:tRNA ribosyltransferase-isomerase of Streptococcus pyogenes serotype M3 (strain ATCC BAA-595 / MGAS315).